A 1039-amino-acid polypeptide reads, in one-letter code: 3',5'-cyclic-AMP phosphodiesterase 4 (1039 aa).

An N-terminal signal peptide occupies residues 1–29 (MFNNNNNDKINNTMMSNNPSGQIINLESI). N11, N34, and N37 each carry an N-linked (GlcNAc...) asparagine glycan. Residues 30-201 (DCNSNLSNTT…KKKVNAESLR (172 aa)) are Extracellular-facing. Disordered regions lie at residues 40 to 63 (SIKD…NNIN) and 116 to 181 (IIPN…NNSI). Positions 45–63 (NNNNNNNNNNNNNINNNIN) are enriched in low complexity. 5 N-linked (GlcNAc...) asparagine glycosylation sites follow: N119, N124, N131, N167, and N178. The chain crosses the membrane as a helical span at residues 202 to 222 (GPIIFQNFILYTFFLIVIGTA). Residues 223–226 (EGTS) are Cytoplasmic-facing. A helical membrane pass occupies residues 227-247 (WAPEIRVANFVPYCVMCVVLL). Residues 248–256 (EFNRLHKKP) lie on the Extracellular side of the membrane. The helical transmembrane segment at 257 to 277 (LLRIIFPLYTSNIPFAYMCIF) threads the bilayer. The Cytoplasmic segment spans residues 278–283 (SREARK). Residues 284–304 (YVLISLLFFASCLCIFLQSGI) traverse the membrane as a helical segment. The Extracellular portion of the chain corresponds to 305–310 (PDLRKH). A helical transmembrane segment spans residues 311–331 (IVIFCIIFMINYGCCILFMDW). At 332-356 (FYIDTTGTKPYRGRILATKIHWGEE) the chain is on the cytoplasmic side. Residues 357–377 (ATILVSMALLGCIFIVLEKFI) form a helical membrane-spanning segment. The Extracellular portion of the chain corresponds to 378-1039 (KSYARCVAEQ…LTQSNYLIVV (662 aa)). The stretch at 384–414 (VAEQHYQIQCLQKEKEKLQTEINISLKKLDL) forms a coiled coil. 4 N-linked (GlcNAc...) asparagine glycosylation sites follow: N406, N430, N500, and N515. The PDEase domain occupies 533–973 (PEITDQGIQE…QQLQQQQQQQ (441 aa)). The Proton donor role is filled by H609. A divalent metal cation is bound by residues H613, H648, and D649. A disordered region spans residues 738-835 (FPTTTNTQQP…NNSNSNNQNQ (98 aa)). A compositionally biased stretch (low complexity) spans 740 to 835 (TTTNTQQPSS…NNSNSNNQNQ (96 aa)). N-linked (GlcNAc...) asparagine glycosylation is found at N769, N791, N795, N804, N809, N823, and N826. D861 contributes to the a divalent metal cation binding site. N-linked (GlcNAc...) asparagine glycans are attached at residues N874, N944, N1018, and N1023. Residues 978-1019 (QQQQQQLHHHQQQQQFQHQQHQQQLQHQHQQQLNNQNQNQNQ) show a composition bias toward low complexity. The interval 978-1033 (QQQQQQLHHHQQQQQFQHQQHQQQLQHQHQQQLNNQNQNQNQSNSNNSNSFGLTQS) is disordered. Residues 1020–1033 (SNSNNSNSFGLTQS) are compositionally biased toward polar residues.

It belongs to the cyclic nucleotide phosphodiesterase family. A divalent metal cation is required as a cofactor.

The protein resides in the cell membrane. It carries out the reaction 3',5'-cyclic AMP + H2O = AMP + H(+). Its activity is regulated as follows. Inhibited by 3-isobutyl-1-methylxanthine (IBMX). Its function is as follows. Phosphodiesterase specific for extracellular cAMP. Involved in the degradation of extracellular cAMP specifically during multicellular development. This Dictyostelium discoideum (Social amoeba) protein is 3',5'-cyclic-AMP phosphodiesterase 4 (Pde4).